The following is an 836-amino-acid chain: MMLDLGPFSDEKFDAKRWVNSSCQARHPQDSLEKHLVDLEMKLQIASEEIGASLEEQSGGALLRVPRATRDVLRLRDDAVSLRGSVAGILQKLKKAEGSSADCIAALARVDNVKQRMEAAYKTLQDAAGLTQLSSTVEDVFASGDLPRAAETLASMRNCLSAVGEVAEFANVRKQLEVLEDRLEAMVQPRLTDALTYHKVDVAQDLRVILIRIGRFKSLELQYSKVRLKPIKQLWEDFDTKQRANKLANERSESQRLSSGDEFQSTSSQTSFASWLTSFYDELLLYLEQEWKWCMVAFPDDYMTLVPKLLVETMGVLGASFVSRLNLATGDAVPETKALAKGVMDLLSGDLPKGINIQTKHLEALIELHNVTGSFARNIQHLFAESELRILIDTLKAVYSPFESFKQKYGKMERAILSSEIAVVDLRGAVTRGVGAQGIELSETVRRMEESIPQVVVLLEAAVERCIGFTGGSEADELILALDDIMLQYISMLQETLKSLRVVCGVDGTGDGVGSKKDASAEKRESSRKMDLTSNEEWSIVQGALQILTVADCLTSRSSVFEASLRATLARLNSSLSISLFGTNLDHNLSHLKSEQTAGDLSMAGRASMDVAAIRLVDVPEKAHKLLNLLEQSKDPRFHALPLASQRVAAFADTVNELVYDVLISKVRQRLGEVSRLPIWSSVEEQTAFPLPNFSSYPQSYVTSVGEYLLTLPQQLEPLAEGISTNGDSNNEDAQFFATEWMFKVAEGATALYMDQLRGIQYISDRGAQQLSVDIEYLSNVLSALSMPIPPVLATFQTCLATPRGELKDVMKSEAGNELDCPTANLVCKMRRISFD.

Coiled coils occupy residues Gln-29 to Glu-49 and Leu-107 to Ala-127. Residues Lys-246–Ser-265 are disordered.

Belongs to the COG7 family. In terms of assembly, component of the conserved oligomeric Golgi complex which is composed of eight different subunits and is required for normal Golgi morphology and localization. Interacts with COG5 and COG6.

It is found in the golgi apparatus membrane. Its function is as follows. Required for normal Golgi function. Necessary for embryo development and pigmentation, especially for the expansion of cells and organs, and for the formation of the organized shoot apical meristem (SAM). Probably involved in the generation of the extra-cellular matrix. The chain is Conserved oligomeric Golgi complex subunit 7 from Arabidopsis thaliana (Mouse-ear cress).